We begin with the raw amino-acid sequence, 407 residues long: Shaggy-related protein kinase GSK1 (407 aa).

Over residues 1–19 (MEAPPGPEPMELDAPPPPA) the composition is skewed to pro residues. The interval 1 to 21 (MEAPPGPEPMELDAPPPPAAV) is disordered. Residues 68–352 (YMAERVVGTG…ALDACAHSFF (285 aa)) form the Protein kinase domain. Residues 74 to 82 (VGTGSFGIV) and Lys97 contribute to the ATP site. Asp193 (proton acceptor) is an active-site residue.

This sequence belongs to the protein kinase superfamily. CMGC Ser/Thr protein kinase family. GSK-3 subfamily. As to quaternary structure, interacts with LIC. As to expression, highly expressed in the entire young panicles, spikelets, awns, vascular bundles of palea and lemma, stigma and rachilla. Expressed in root tips, root hairs, lamina joint in the collar region, vascular bundles of coleoptiles.

The catalysed reaction is L-seryl-[protein] + ATP = O-phospho-L-seryl-[protein] + ADP + H(+). The enzyme catalyses L-threonyl-[protein] + ATP = O-phospho-L-threonyl-[protein] + ADP + H(+). Probable serine-threonine kinase that may act as a negative regulator of brassinosteroid (BR) signaling during flower development. May have physiological roles in stress signal-transduction pathways. Phosphorylates LIC in response to BR perception. The protein is Shaggy-related protein kinase GSK1 of Oryza sativa subsp. japonica (Rice).